The chain runs to 261 residues: uncharacterized protein (261 aa).

The N-terminal stretch at 1 to 22 (MRDSKRVVLYISIMVLSIFIIG) is a signal peptide. A lipid anchor (N-palmitoyl cysteine) is attached at Cys-23. Cys-23 carries the S-diacylglycerol cysteine lipid modification.

The protein belongs to the staphylococcal tandem lipoprotein family.

The protein resides in the cell membrane. This is an uncharacterized protein from Staphylococcus aureus (strain N315).